The primary structure comprises 1000 residues: Lysine-specific histone demethylase 1 (1000 aa).

The segment at 104 to 123 (RRPAGRRGRPALNTSNSLER) is disordered. The stretch at 107–137 (AGRRGRPALNTSNSLERNGTRYVSAEAPISV) forms a coiled coil. The SWIRM domain maps to 153–249 (CYESAIASNL…YGCIYIISSL (97 aa)). FAD-binding positions include 260–302 (VAII…IYEA), E301, and 328–329 (LA). The demethylase activity stretch occupies residues 279–950 (LFAQYEQDFL…RCESQPIPED (672 aa)). A coiled-coil region spans residues 434–529 (IGWYISIEAF…ADMLNSLAST (96 aa)). Positions 780–800 (TYGTKRNAQQALGKEGERENK) are disordered. The segment at residues 841 to 921 (SRPSANPYLL…NYSTRLEEYQ (81 aa)) is a DNA-binding region (HMG box). Position 908 to 909 (908 to 909 (AR)) interacts with FAD. The segment covering 959–972 (EQEDEHLHPEKEGM) has biased composition (basic and acidic residues). Positions 959–1000 (EQEDEHLHPEKEGMSVENSDDDYHDDLDYEDSISEVFPDNFS) are disordered. Residues 976–991 (NSDDDYHDDLDYEDSI) are compositionally biased toward acidic residues.

This sequence belongs to the flavin monoamine oxidase family. As to quaternary structure, component of the SWM histone demethylase complex composed of at least lsd1, lsd2, phf1 and phf2. Interacts directly with lsd2. FAD serves as cofactor.

The protein resides in the nucleus. Catalytic component of the SWM histone demethylase complex that specifically demethylates H3K9me2, a specific tag for epigenetic transcriptional activation, thereby acting as a corepressor. Acts by oxidizing the substrate by FAD to generate the corresponding imine that is subsequently hydrolyzed. Has a role in regulating heterochromatin propagation and euchromatic transcription. Also has a gene activating role. The polypeptide is Lysine-specific histone demethylase 1 (lsd1) (Schizosaccharomyces pombe (strain 972 / ATCC 24843) (Fission yeast)).